A 998-amino-acid polypeptide reads, in one-letter code: Antigenic heat-stable 120 kDa protein (998 aa).

The disordered stretch occupies residues 1 to 69 (GGFMSQDHTG…LSGTISTDDQ (69 aa)). Residues 12 to 21 (ENDEGYESDI) show a composition bias toward acidic residues. A compositionally biased stretch (polar residues) spans 46-68 (TPASSTQSTPAISTLSGTISTDD).

It is found in the cytoplasm. The polypeptide is Antigenic heat-stable 120 kDa protein (sca4) (Rickettsia akari).